We begin with the raw amino-acid sequence, 255 residues long: 4-hydroxy-tetrahydrodipicolinate reductase (255 aa).

Residues Gly8–Val13, Gly88–Thr90, and Ala112–Met115 each bind NAD(+). His144 functions as the Proton donor/acceptor in the catalytic mechanism. His145 lines the (S)-2,3,4,5-tetrahydrodipicolinate pocket. The active-site Proton donor is Lys148. Gly154–Thr155 is a binding site for (S)-2,3,4,5-tetrahydrodipicolinate.

The protein belongs to the DapB family.

The protein localises to the cytoplasm. The catalysed reaction is (S)-2,3,4,5-tetrahydrodipicolinate + NAD(+) + H2O = (2S,4S)-4-hydroxy-2,3,4,5-tetrahydrodipicolinate + NADH + H(+). It carries out the reaction (S)-2,3,4,5-tetrahydrodipicolinate + NADP(+) + H2O = (2S,4S)-4-hydroxy-2,3,4,5-tetrahydrodipicolinate + NADPH + H(+). It functions in the pathway amino-acid biosynthesis; L-lysine biosynthesis via DAP pathway; (S)-tetrahydrodipicolinate from L-aspartate: step 4/4. Catalyzes the conversion of 4-hydroxy-tetrahydrodipicolinate (HTPA) to tetrahydrodipicolinate. The sequence is that of 4-hydroxy-tetrahydrodipicolinate reductase from Sulfurimonas denitrificans (strain ATCC 33889 / DSM 1251) (Thiomicrospira denitrificans (strain ATCC 33889 / DSM 1251)).